A 339-amino-acid polypeptide reads, in one-letter code: Caspase drICE (339 aa).

Residues 1–28 (MDATNNGESADQVGIRVGNPEQPNDHTD) constitute a propeptide that is removed on maturation. Residues 1–45 (MDATNNGESADQVGIRVGNPEQPNDHTDALGSVGSGGAGSSGLVA) are disordered. Catalysis depends on residues H169 and C211. The propeptide occupies 218 to 230 (GGVTMQRSQTETD).

The protein belongs to the peptidase C14A family. In terms of assembly, heterotetramer that consists of two anti-parallel arranged heterodimers, each one formed by a 21 kDa (p21) and a 12 kDa (p12) subunit. Inactive pro-form can homodimerize. Dronc and Drice can form a stable complex. Interacts with Diap2 (via BIR3 domain) to form a stable complex. May interact with some isoforms of Dark.

Its activity is regulated as follows. Zymogen activated by proteolytic cleavage; cleaved by the initiator caspase Dronc upon apoptosis induction. In terms of biological role, involved in the activation cascade of caspases responsible for apoptosis execution. Acts downstream of rpr. Cleaves baculovirus p35 and lamin DmO in vitro. This is Caspase drICE (Drice) from Drosophila melanogaster (Fruit fly).